The primary structure comprises 281 residues: Cis-2,3-dihydrobiphenyl-2,3-diol dehydrogenase (281 aa).

NAD(+) is bound at residue isoleucine 10 to valine 34. Residue serine 142 participates in substrate binding. Catalysis depends on tyrosine 155, which acts as the Proton acceptor.

This sequence belongs to the short-chain dehydrogenases/reductases (SDR) family. In terms of assembly, homotetramer.

The catalysed reaction is (2R,3S)-3-phenylcyclohexa-3,5-diene-1,2-diol + NAD(+) = biphenyl-2,3-diol + NADH + H(+). It participates in xenobiotic degradation; biphenyl degradation; 2-hydroxy-2,4-pentadienoate and benzoate from biphenyl: step 2/4. This chain is Cis-2,3-dihydrobiphenyl-2,3-diol dehydrogenase (bphB), found in Comamonas testosteroni (Pseudomonas testosteroni).